Reading from the N-terminus, the 134-residue chain is Large-conductance mechanosensitive channel (134 aa).

2 consecutive transmembrane segments (helical) span residues 16-36 (VIDLAVGVVIGAAFGKIVTAL) and 84-104 (INTLIQFVIVAFAIFLVIKVI).

This sequence belongs to the MscL family. As to quaternary structure, homopentamer.

The protein localises to the cell inner membrane. Channel that opens in response to stretch forces in the membrane lipid bilayer. May participate in the regulation of osmotic pressure changes within the cell. This Stenotrophomonas maltophilia (strain R551-3) protein is Large-conductance mechanosensitive channel.